We begin with the raw amino-acid sequence, 162 residues long: Small ribosomal subunit protein uS9 (162 aa).

The protein belongs to the universal ribosomal protein uS9 family.

The chain is Small ribosomal subunit protein uS9 from Methylobacterium nodulans (strain LMG 21967 / CNCM I-2342 / ORS 2060).